We begin with the raw amino-acid sequence, 225 residues long: RNA-binding protein 24-A (225 aa).

An RRM domain is found at 11–88; the sequence is TKIFVGGLPY…RKANVNLAYL (78 aa).

The protein resides in the nucleus. Its subcellular location is the cytoplasm. In terms of biological role, multifunctional RNA-binding protein involved in the regulation of pre-mRNA splicing, mRNA stability and mRNA translation important for cell fate decision and differentiation. Plays a major role in pre-mRNA alternative splicing regulation. Mediates preferentially muscle-specific exon inclusion in numerous mRNAs important for striated cardiac and skeletal muscle cell differentiation. Binds to intronic splicing enhancer (ISE) composed of stretches of GU-rich motifs localized in flanking intron of exon that will be included by alternative splicing. Involved in embryonic stem cell (ESC) transition to cardiac cell differentiation by promoting pre-mRNA alternative splicing events of several pluripotency and/or differentiation genes. Plays a role in the regulation of mRNA stability and mRNA translation to which it is bound. Involved in myogenic differentiation by regulating myog levels. Binds to a huge amount of mRNAs. Required for embryonic heart development, sarcomer and M-band formation in striated muscles. The protein is RNA-binding protein 24-A (rbm24-a) of Xenopus laevis (African clawed frog).